Reading from the N-terminus, the 342-residue chain is Deoxyhypusine synthase regulatory subunit (342 aa).

Residues 72–76 (SNLIS), 98–100 (TAG), glutamate 104, aspartate 213, 282–283 (TG), and 316–317 (DA) contribute to the NAD(+) site.

It belongs to the deoxyhypusine synthase family. In terms of assembly, heterotetramer formed by a homodimer of the non-catalytic regulatory subunit DHSp and a homodimer of the catalytic subunit DHSc where DHSc appears to bind spermidine and DHSp appears to bind NAD(+).

It participates in protein modification; eIF5A hypusination. In terms of biological role, required for the activation and stability of deoxyhypusine synthase DHSc. Required for cell growth and survival. The polypeptide is Deoxyhypusine synthase regulatory subunit (Trypanosoma brucei brucei (strain 927/4 GUTat10.1)).